Consider the following 720-residue polypeptide: Phenylalanine--tRNA ligase beta subunit, chloroplastic (720 aa).

Positions 319–404 constitute a B5 domain; it reads NSTLNIDISL…RVYGYNQFQS (86 aa). The Mg(2+) site is built by Asp382, Asp388, Glu391, and Glu392. The 94-residue stretch at 626–719 folds into the FDX-ACB domain; the sequence is SKYPCITRDL…IIKKLNLEIR (94 aa).

The protein belongs to the phenylalanyl-tRNA synthetase beta subunit family. Type 1 subfamily. As to quaternary structure, tetramer of two alpha and two beta subunits. It depends on Mg(2+) as a cofactor.

It localises to the plastid. The protein localises to the chloroplast. It carries out the reaction tRNA(Phe) + L-phenylalanine + ATP = L-phenylalanyl-tRNA(Phe) + AMP + diphosphate + H(+). The polypeptide is Phenylalanine--tRNA ligase beta subunit, chloroplastic (pheT) (Porphyra purpurea (Red seaweed)).